Consider the following 125-residue polypeptide: Small ribosomal subunit protein uS13 (125 aa).

Residues 93–125 (RRGLPVRGQRTKTNARTRKGPKRTVAGKKKAGR) are disordered.

The protein belongs to the universal ribosomal protein uS13 family. Part of the 30S ribosomal subunit. Forms a loose heterodimer with protein S19. Forms two bridges to the 50S subunit in the 70S ribosome.

Its function is as follows. Located at the top of the head of the 30S subunit, it contacts several helices of the 16S rRNA. In the 70S ribosome it contacts the 23S rRNA (bridge B1a) and protein L5 of the 50S subunit (bridge B1b), connecting the 2 subunits; these bridges are implicated in subunit movement. Contacts the tRNAs in the A and P-sites. The protein is Small ribosomal subunit protein uS13 of Renibacterium salmoninarum (strain ATCC 33209 / DSM 20767 / JCM 11484 / NBRC 15589 / NCIMB 2235).